Consider the following 404-residue polypeptide: NADH-quinone oxidoreductase subunit D (404 aa).

It belongs to the complex I 49 kDa subunit family. NDH-1 is composed of 14 different subunits. Subunits NuoB, C, D, E, F, and G constitute the peripheral sector of the complex.

It is found in the cell inner membrane. It carries out the reaction a quinone + NADH + 5 H(+)(in) = a quinol + NAD(+) + 4 H(+)(out). NDH-1 shuttles electrons from NADH, via FMN and iron-sulfur (Fe-S) centers, to quinones in the respiratory chain. The immediate electron acceptor for the enzyme in this species is believed to be ubiquinone. Couples the redox reaction to proton translocation (for every two electrons transferred, four hydrogen ions are translocated across the cytoplasmic membrane), and thus conserves the redox energy in a proton gradient. This chain is NADH-quinone oxidoreductase subunit D, found in Dinoroseobacter shibae (strain DSM 16493 / NCIMB 14021 / DFL 12).